A 471-amino-acid polypeptide reads, in one-letter code: Adenosylhomocysteinase (471 aa).

The substrate site is built by threonine 58, aspartate 133, and glutamate 195. 196-198 (TTT) serves as a coordination point for NAD(+). Substrate contacts are provided by lysine 225 and aspartate 229. Residues asparagine 230, 259-264 (GFGDVG), glutamate 282, asparagine 317, 338-340 (IGH), and asparagine 383 contribute to the NAD(+) site.

This sequence belongs to the adenosylhomocysteinase family. NAD(+) is required as a cofactor.

It is found in the cytoplasm. The enzyme catalyses S-adenosyl-L-homocysteine + H2O = L-homocysteine + adenosine. The protein operates within amino-acid biosynthesis; L-homocysteine biosynthesis; L-homocysteine from S-adenosyl-L-homocysteine: step 1/1. May play a key role in the regulation of the intracellular concentration of adenosylhomocysteine. The sequence is that of Adenosylhomocysteinase from Rhodopseudomonas palustris (strain BisB5).